Reading from the N-terminus, the 180-residue chain is Thiol:disulfide interchange protein TxlA homolog (180 aa).

Residues 10-26 form a helical membrane-spanning segment; the sequence is LLAVVAIALSAAVYLGF. The Thioredoxin domain maps to 34 to 143; that stretch reads SLEAQAQRAI…LEQNITALVA (110 aa). Cysteines 64 and 67 form a disulfide.

This sequence belongs to the thioredoxin family.

The protein resides in the cell membrane. Functionally, required for disulfide bond formation in some proteins. Acts by transferring its disulfide bond to other proteins and is reduced in the process. The protein is Thiol:disulfide interchange protein TxlA homolog (txlA) of Synechocystis sp. (strain ATCC 27184 / PCC 6803 / Kazusa).